The following is a 330-amino-acid chain: CRISPR-associated endonuclease Cas1 (330 aa).

Positions 154, 222, and 237 each coordinate Mn(2+).

The protein belongs to the CRISPR-associated endonuclease Cas1 family. As to quaternary structure, homodimer, forms a heterotetramer with a Cas2 homodimer. Requires Mg(2+) as cofactor. The cofactor is Mn(2+).

CRISPR (clustered regularly interspaced short palindromic repeat), is an adaptive immune system that provides protection against mobile genetic elements (viruses, transposable elements and conjugative plasmids). CRISPR clusters contain spacers, sequences complementary to antecedent mobile elements, and target invading nucleic acids. CRISPR clusters are transcribed and processed into CRISPR RNA (crRNA). Acts as a dsDNA endonuclease. Involved in the integration of spacer DNA into the CRISPR cassette. This Clostridium perfringens (strain SM101 / Type A) protein is CRISPR-associated endonuclease Cas1.